The sequence spans 379 residues: Histidinol-phosphate aminotransferase (379 aa).

Lys-231 carries the N6-(pyridoxal phosphate)lysine modification.

The protein belongs to the class-II pyridoxal-phosphate-dependent aminotransferase family. Histidinol-phosphate aminotransferase subfamily. Homodimer. Pyridoxal 5'-phosphate is required as a cofactor.

The enzyme catalyses L-histidinol phosphate + 2-oxoglutarate = 3-(imidazol-4-yl)-2-oxopropyl phosphate + L-glutamate. The protein operates within amino-acid biosynthesis; L-histidine biosynthesis; L-histidine from 5-phospho-alpha-D-ribose 1-diphosphate: step 7/9. This Mycolicibacterium smegmatis (strain ATCC 700084 / mc(2)155) (Mycobacterium smegmatis) protein is Histidinol-phosphate aminotransferase.